Consider the following 706-residue polypeptide: Dihydroxyacetone synthase (706 aa).

Thiamine diphosphate-binding positions include histidine 76 and 126-128; that span reads GPL. Mg(2+) contacts are provided by aspartate 167, asparagine 197, and valine 199. Asparagine 197 is a binding site for thiamine diphosphate. 3 residues coordinate thiamine diphosphate: histidine 273, glutamate 431, and phenylalanine 459. Glutamate 431 acts as the Proton donor in catalysis. The Microbody targeting signal motif lies at 704–706; sequence NHL.

It belongs to the transketolase family. Requires Mg(2+) as cofactor. It depends on Ca(2+) as a cofactor. The cofactor is Mn(2+). Co(2+) is required as a cofactor. Thiamine diphosphate serves as cofactor.

It localises to the peroxisome. The enzyme catalyses D-xylulose 5-phosphate + formaldehyde = dihydroxyacetone + D-glyceraldehyde 3-phosphate. Functionally, involved in assimilation of formaldehyde. The sequence is that of Dihydroxyacetone synthase (DAS1) from Candida boidinii (Yeast).